The sequence spans 314 residues: Putative S-adenosyl-L-methionine-dependent methyltransferase MAP_0256 (314 aa).

S-adenosyl-L-methionine is bound by residues Asp-132 and 161–162 (DL).

The protein belongs to the UPF0677 family.

Functionally, exhibits S-adenosyl-L-methionine-dependent methyltransferase activity. This chain is Putative S-adenosyl-L-methionine-dependent methyltransferase MAP_0256, found in Mycolicibacterium paratuberculosis (strain ATCC BAA-968 / K-10) (Mycobacterium paratuberculosis).